We begin with the raw amino-acid sequence, 396 residues long: Acetyl-CoA acetyltransferase ERG10, cytosolic (396 aa).

The Acyl-thioester intermediate role is filled by C91. Y186 serves as a coordination point for K(+). The CoA site is built by N227 and K230. K(+) is bound by residues A246, P247, and V347. Residues H351 and C381 each act as proton acceptor in the active site. N382 lines the chloride pocket.

This sequence belongs to the thiolase-like superfamily. Thiolase family. As to quaternary structure, homotetramer. It depends on K(+) as a cofactor.

It is found in the cytoplasm. Its subcellular location is the cytosol. It catalyses the reaction 2 acetyl-CoA = acetoacetyl-CoA + CoA. It participates in metabolic intermediate biosynthesis; (R)-mevalonate biosynthesis; (R)-mevalonate from acetyl-CoA: step 1/3. Its function is as follows. Acetyl-CoA acetyltransferase; part of the first module of ergosterol biosynthesis pathway that includes the early steps of the pathway, conserved across all eukaryotes, and which results in the formation of mevalonate from acetyl-coenzyme A (acetyl-CoA). ERG10B catalyzes the formation of acetoacetyl-CoA from acetyl-CoA. The first module starts with the action of the cytosolic acetyl-CoA acetyltransferase ERG10B that catalyzes the formation of acetoacetyl-CoA. The hydroxymethylglutaryl-CoA synthases ERG13 then condenses acetyl-CoA with acetoacetyl-CoA to form HMG-CoA. The rate-limiting step of the early module is the reduction to mevalonate by the 3-hydroxy-3-methylglutaryl-coenzyme A (HMG-CoA) reductases HMG1. The polypeptide is Acetyl-CoA acetyltransferase ERG10, cytosolic (Gibberella zeae (strain ATCC MYA-4620 / CBS 123657 / FGSC 9075 / NRRL 31084 / PH-1) (Wheat head blight fungus)).